Consider the following 210-residue polypeptide: Na(+)-translocating NADH-quinone reductase subunit D (210 aa).

The next 6 helical transmembrane spans lie at 14 to 34 (PIVN…ALAV), 42 to 62 (LVMA…ISMI), 72 to 92 (IIVQ…LLQA), 103 to 123 (VFVG…AYAM), 131 to 151 (FMDG…VGFV), and 178 to 198 (NGLL…IWII).

This sequence belongs to the NqrDE/RnfAE family. In terms of assembly, composed of six subunits; NqrA, NqrB, NqrC, NqrD, NqrE and NqrF.

The protein resides in the cell inner membrane. The catalysed reaction is a ubiquinone + n Na(+)(in) + NADH + H(+) = a ubiquinol + n Na(+)(out) + NAD(+). In terms of biological role, NQR complex catalyzes the reduction of ubiquinone-1 to ubiquinol by two successive reactions, coupled with the transport of Na(+) ions from the cytoplasm to the periplasm. NqrA to NqrE are probably involved in the second step, the conversion of ubisemiquinone to ubiquinol. The polypeptide is Na(+)-translocating NADH-quinone reductase subunit D (Shewanella baltica (strain OS223)).